The sequence spans 553 residues: Hydroxylamine reductase (553 aa).

Residues cysteine 3, cysteine 6, cysteine 18, and cysteine 25 each coordinate [2Fe-2S] cluster. Histidine 252, glutamate 276, cysteine 320, cysteine 408, cysteine 436, cysteine 461, glutamate 495, and lysine 497 together coordinate hybrid [4Fe-2O-2S] cluster. Cysteine 408 is subject to Cysteine persulfide.

It belongs to the HCP family. It depends on [2Fe-2S] cluster as a cofactor. Hybrid [4Fe-2O-2S] cluster serves as cofactor.

It is found in the cytoplasm. It catalyses the reaction A + NH4(+) + H2O = hydroxylamine + AH2 + H(+). Functionally, catalyzes the reduction of hydroxylamine to form NH(3) and H(2)O. The polypeptide is Hydroxylamine reductase (Photobacterium phosphoreum).